Here is a 171-residue protein sequence, read N- to C-terminus: Endoribonuclease YbeY (171 aa).

The Zn(2+) site is built by His-126, His-130, and His-136.

Belongs to the endoribonuclease YbeY family. The cofactor is Zn(2+).

It is found in the cytoplasm. Its function is as follows. Single strand-specific metallo-endoribonuclease involved in late-stage 70S ribosome quality control and in maturation of the 3' terminus of the 16S rRNA. The protein is Endoribonuclease YbeY of Rhizobium johnstonii (strain DSM 114642 / LMG 32736 / 3841) (Rhizobium leguminosarum bv. viciae).